Consider the following 463-residue polypeptide: Competence protein ComFA (463 aa).

Zn(2+)-binding residues include Cys-60, Cys-63, Cys-84, and Cys-87. A Helicase ATP-binding domain is found at 133-285 (IEAISKKEEL…LNGQLHSVRI (153 aa)). 146 to 153 (AVCGAGKT) contributes to the ATP binding site. The DEAD box signature appears at 233 to 236 (DEVD). In terms of domain architecture, Helicase C-terminal spans 317–463 (AVKRWIEFHV…ELAAKVECTD (147 aa)).

Belongs to the DEAD box helicase family. As to quaternary structure, monomer and dimer in solution. Interacts with DprA and ComFC; ComFA-ComFC form rings about 150 Angstroms in diameter with apparent 6-fold symmetry. Zn(2+) is required as a cofactor.

The protein localises to the cytoplasm. Functionally, involved in transformation (genetic competence for DNA uptake). Required for DNA uptake but not for DNA binding to cells. DNA uptake is energy dependent, this protein may provide the driving force for DNA uptake. Does not have helicase activity, translocates on single-stranded (ss)DNA in a 5'-3' direction in an ATP-dependent manner, but does not unwind double-stranded (ds)DNA. ATP hydrolysis causes the release of ssDNA from ComFA. A ssDNA-stimulated ATPase; dsDNA does not stimulate ATPase. ATP hydrolysis causes the release of ssDNA from ComFA. Binds ssDNA but only very poorly to dsDNA in the absence of ATP. Binding to ssDNA does not require free DNA ends. The chain is Competence protein ComFA from Bacillus subtilis (strain 168).